The chain runs to 551 residues: RCC1 and BTB domain-containing protein 2 (551 aa).

6 RCC1 repeats span residues 64 to 115, 117 to 169, 171 to 222, 223 to 274, 276 to 326, and 328 to 382; these read NDEI…VLAT, EGEV…VLTS, GEVF…AVVD, TGEV…VLTD, GQVY…AAKT, and GGHV…TVAE. Residues 394-457 form the BTB domain; it reads ADLKFLVDGK…LYTDSISLSP (64 aa).

Its subcellular location is the cytoplasmic vesicle. It localises to the secretory vesicle. The protein localises to the acrosome. In Homo sapiens (Human), this protein is RCC1 and BTB domain-containing protein 2 (RCBTB2).